Reading from the N-terminus, the 220-residue chain is HTH-type transcriptional repressor KstR (220 aa).

The HTH tetR-type domain maps to 36-96; the sequence is RERRKRILDA…SALGREFSRI (61 aa). Positions 59–78 form a DNA-binding region, H-T-H motif; that stretch reads QMRAVADRADVAVGTLYRYF.

Homodimer.

In terms of biological role, controls the expression of genes used for utilizing diverse lipids as energy sources. This chain is HTH-type transcriptional repressor KstR (kstR), found in Mycobacterium tuberculosis (strain ATCC 25618 / H37Rv).